We begin with the raw amino-acid sequence, 293 residues long: Iron-sulfur cluster transfer protein Nubpl (293 aa).

The CXXC motif probably involved in coordinating iron-sulfur cluster binding stretch occupies residues 214–217 (CQNC).

This sequence belongs to the Mrp/NBP35 ATP-binding proteins family. As to quaternary structure, homodimer; dimerization is not reliant on iron-sulfur cluster binding. The cofactor is [4Fe-4S] cluster.

Its subcellular location is the mitochondrion membrane. Iron-sulfur cluster transfer protein involved in the assembly of the mitochondrial membrane respiratory chain NADH dehydrogenase (Complex I). May deliver one or more Fe-S clusters to complex I subunits. Alleviates pausing in mitochondrial DNA (mtDNA) replication at slow zone 2. May be involved in mtDNA-helicase-mediated mtDNA unwinding and replication by transferring iron-sulfur clusters. This Drosophila melanogaster (Fruit fly) protein is Iron-sulfur cluster transfer protein Nubpl.